Here is a 448-residue protein sequence, read N- to C-terminus: UDP-N-acetylmuramoylalanine--D-glutamate ligase (448 aa).

UDP-N-acetyl-alpha-D-muramoyl-L-alanine is bound by residues lysine 17, serine 18, threonine 38, arginine 39, and glycine 78. ATP is bound at residue 116–122 (GSNAKST). ADP contacts are provided by alanine 119, lysine 120, serine 121, and threonine 122. UDP-N-acetyl-alpha-D-muramoyl-L-alanine is bound by residues asparagine 143 and histidine 188. 4 residues coordinate ADP: asparagine 278, arginine 309, aspartate 324, and lysine 326.

It belongs to the MurCDEF family.

It localises to the cytoplasm. The enzyme catalyses UDP-N-acetyl-alpha-D-muramoyl-L-alanine + D-glutamate + ATP = UDP-N-acetyl-alpha-D-muramoyl-L-alanyl-D-glutamate + ADP + phosphate + H(+). It functions in the pathway cell wall biogenesis; peptidoglycan biosynthesis. In terms of biological role, involved in cell wall formation. Catalyzes the addition of D-glutamate to the peptidoglycan precursor UDP-N-acetylmuramoyl-L-alanine (UMA). This is UDP-N-acetylmuramoylalanine--D-glutamate ligase from Pseudomonas aeruginosa (strain ATCC 15692 / DSM 22644 / CIP 104116 / JCM 14847 / LMG 12228 / 1C / PRS 101 / PAO1).